A 2280-amino-acid polypeptide reads, in one-letter code: Protein Ycf2 (2280 aa).

1631-1638 is an ATP binding site; that stretch reads GSIGTGRS.

Belongs to the Ycf2 family.

The protein resides in the plastid. The protein localises to the chloroplast stroma. Probable ATPase of unknown function. Its presence in a non-photosynthetic plant (Epifagus virginiana) and experiments in tobacco indicate that it has an essential function which is probably not related to photosynthesis. This is Protein Ycf2 (ycf2-A) from Nicotiana tabacum (Common tobacco).